Consider the following 126-residue polypeptide: Spermidine export protein MdtJ (126 aa).

A run of 4 helical transmembrane segments spans residues 1–21 (MMIY…GTLS), 32–52 (TGHI…ALAV), 55–75 (VALG…ITVF), and 82–102 (ESLS…IMLV). A disordered region spans residues 104–126 (SGTRKPKKPNSPNRNSGEHHATA).

The protein belongs to the drug/metabolite transporter (DMT) superfamily. Small multidrug resistance (SMR) (TC 2.A.7.1) family. MdtJ subfamily. Forms a complex with MdtI.

It localises to the cell inner membrane. Catalyzes the excretion of spermidine. The protein is Spermidine export protein MdtJ of Yersinia enterocolitica serotype O:8 / biotype 1B (strain NCTC 13174 / 8081).